The primary structure comprises 209 residues: Large ribosomal subunit protein uL4 (209 aa).

Positions 46 to 71 are disordered; it reads GTSSTKTRSEVRGSSKKPWKQKGTGR. Over residues 59 to 71 the composition is skewed to basic residues; that stretch reads SSKKPWKQKGTGR.

The protein belongs to the universal ribosomal protein uL4 family. As to quaternary structure, part of the 50S ribosomal subunit.

Functionally, one of the primary rRNA binding proteins, this protein initially binds near the 5'-end of the 23S rRNA. It is important during the early stages of 50S assembly. It makes multiple contacts with different domains of the 23S rRNA in the assembled 50S subunit and ribosome. In terms of biological role, forms part of the polypeptide exit tunnel. This is Large ribosomal subunit protein uL4 from Borreliella afzelii (strain PKo) (Borrelia afzelii).